The sequence spans 364 residues: MGSLSESHTQYKHGVEVEEDEEESYSRAMQLSMAIVLPMATQSAIQLGVFEIIAKAPGGRLSASEIATILQAQNPKAPVMLDRMLRLLVSHRVLDCSVSGPAGERLYGLTSVSKYFVPDQDGASLGNFMALPLDKVFMESWMGVKGAVMEGGIPFNRVHGMHIFEYASSNSKFSDTYHRAMFNHSTIALKRILEHYKGFENVTKLVDVGGGLGVTLSMIASKYPHIQAINFDLPHVVQDAASYPGVEHVGGNMFESVPEGDAILMKWILHCWDDEQCLRILKNCYKATPENGKVIVMNSVVPETPEVSSSARETSLLDVLLMTRDGGGRERTQKEFTELAIGAGFKGINFACCVCNLHIMEFFK.

The segment at 1 to 20 (MGSLSESHTQYKHGVEVEED) is disordered. 4 residues coordinate S-adenosyl-L-methionine: glycine 209, aspartate 232, methionine 253, and lysine 266. The active-site Proton acceptor is the histidine 270.

Belongs to the class I-like SAM-binding methyltransferase superfamily. Cation-independent O-methyltransferase family. COMT subfamily. Homodimer. In terms of tissue distribution, expressed in leaves, flowers, stems and roots. Detected in the vascular tissues in stems, in the rhizodermis or the endodermis of roots, in the inside of carpels, in the central vascular bundles of the syncarp ovary and in the secretory oil glands located around the outer ovary wall.

It catalyses the reaction anthranilate + S-adenosyl-L-methionine = N-methylanthranilate + S-adenosyl-L-homocysteine + H(+). Inhibited by Ca(2+), Co(2+), Fe(2+), Fe(3+), Cu(2+) or Zn(2+). No effect of Mg(2+). Involved in the biosynthesis of acridine alkaloids. N-methyltransferase with a strict substrate specificity for anthranilate. No activity with anthranilic acid methyl ester, anthraniloyl CoA, 3- or 4-amino-benzoic acid, salicylic acid, catechol, eugenol, caffeic acid, quercetin, theobromin, theophyllin, putrescine and nicotinic acid among others. This chain is Anthranilate N-methyltransferase, found in Ruta graveolens (Common rue).